The chain runs to 159 residues: Ribosomal RNA large subunit methyltransferase H (159 aa).

S-adenosyl-L-methionine is bound by residues Leu76, Gly108, and Phe127–Phe132.

Belongs to the RNA methyltransferase RlmH family. As to quaternary structure, homodimer.

It is found in the cytoplasm. It carries out the reaction pseudouridine(1915) in 23S rRNA + S-adenosyl-L-methionine = N(3)-methylpseudouridine(1915) in 23S rRNA + S-adenosyl-L-homocysteine + H(+). Specifically methylates the pseudouridine at position 1915 (m3Psi1915) in 23S rRNA. In Staphylococcus carnosus (strain TM300), this protein is Ribosomal RNA large subunit methyltransferase H.